The chain runs to 443 residues: Cysteine proteinase B (443 aa).

Positions 1–27 are cleaved as a signal peptide; it reads MATSRAALCAVAVVCVVLAAACAPARA. Residues 28–125 constitute a propeptide, activation peptide; the sequence is IHVGTPAAAL…YRKARADLSA (98 aa). 2 disulfide bridges follow: cysteine 147/cysteine 188 and cysteine 181/cysteine 226. Residue cysteine 150 is part of the active site. N-linked (GlcNAc...) asparagine glycosylation is present at asparagine 228. Cysteine 281 and cysteine 329 are disulfide-bonded. Active-site residues include histidine 288 and asparagine 308.

Belongs to the peptidase C1 family.

The polypeptide is Cysteine proteinase B (LMCPB) (Leishmania mexicana).